The primary structure comprises 487 residues: GTPase Der (487 aa).

EngA-type G domains lie at 3–167 and 203–378; these read LTLA…DEME and LQVA…EVWN. Residues 9–16, 56–60, and 119–122 contribute to the GTP site; these read GRPNVGKS, DTAGL, and NKAE. A compositionally biased stretch (acidic residues) spans 167-190; it reads EQQAEEQAPETDVDLDPEDEDGEE. A disordered region spans residues 167 to 191; the sequence is EQQAEEQAPETDVDLDPEDEDGEEV. Residues 209-216, 256-260, and 321-324 each bind GTP; these read GRPNAGKS, DTAGM, and NKWD. The KH-like domain occupies 379 to 465; the sequence is RRIPTAALNR…RLTLRGQGDK (87 aa). Residues 458 to 487 form a disordered region; sequence TLRGQGDKNPYKGRRKKNAGALAKHLKSRG. The span at 468-487 shows a compositional bias: basic residues; the sequence is YKGRRKKNAGALAKHLKSRG.

This sequence belongs to the TRAFAC class TrmE-Era-EngA-EngB-Septin-like GTPase superfamily. EngA (Der) GTPase family. As to quaternary structure, associates with the 50S ribosomal subunit.

In terms of biological role, GTPase that plays an essential role in the late steps of ribosome biogenesis. The protein is GTPase Der of Ruegeria pomeroyi (strain ATCC 700808 / DSM 15171 / DSS-3) (Silicibacter pomeroyi).